We begin with the raw amino-acid sequence, 393 residues long: MASVDELQKKIKELEAKLAAVEAKGGPMRQKIEVMSSEVVDSNPYSRLMALKRMGIVNNYEQIREKTVAVVGVGGVGSVTAEMLTRCGIGKLILFDYDKVELANMNRLFFQPHQAGLSKVDAAAATLQNINPDVTIDAYNYNITTVDNFQKFCDTISKGSLTGGAVDLVLSCVDNFEARMAINTACNELDQKWFESGVSENAVSGHIQFISPGESACFACAPPLVVATKVDERTLKREGVCAASLPTTMGIVAGFLVQNSLKYLLEFGNVTHYLGYSALTDFFPTMSLQPNPTCDDASCRARQEQRRLQPRVELAAEVTEDCGPVHQDNDWGISVLEENSPADEDCPGLKLVDGVQVAYSIPVDSSTPESSTGGAVAASELSLEDLMQQMKTM.

Residues Gly-75, Asp-96, Lys-119, Asn-142, and Asn-175 each coordinate ATP. 2 residues coordinate Zn(2+): Cys-217 and Cys-220. The Glycyl thioester intermediate role is filled by Cys-241. Zn(2+)-binding residues include Cys-294 and Cys-299.

It belongs to the ubiquitin-activating E1 family. UBA5 subfamily.

Functionally, E1-like enzyme which activates UFM1. The protein is Ubiquitin-like modifier-activating enzyme 5 of Bombyx mori (Silk moth).